A 468-amino-acid polypeptide reads, in one-letter code: 6-phosphogluconate dehydrogenase, decarboxylating (468 aa).

NADP(+) contacts are provided by residues 10 to 15 (GMAVMG), 33 to 35 (NRS), 74 to 76 (VKA), and asparagine 102. Substrate is bound by residues asparagine 102 and 128 to 130 (SGG). The active-site Proton acceptor is the lysine 183. Residue 186 to 187 (HN) participates in substrate binding. Glutamate 190 (proton donor) is an active-site residue. Substrate is bound by residues tyrosine 191, lysine 260, arginine 287, arginine 445, and histidine 451.

This sequence belongs to the 6-phosphogluconate dehydrogenase family. Homodimer.

It carries out the reaction 6-phospho-D-gluconate + NADP(+) = D-ribulose 5-phosphate + CO2 + NADPH. It functions in the pathway carbohydrate degradation; pentose phosphate pathway; D-ribulose 5-phosphate from D-glucose 6-phosphate (oxidative stage): step 3/3. In terms of biological role, catalyzes the oxidative decarboxylation of 6-phosphogluconate to ribulose 5-phosphate and CO(2), with concomitant reduction of NADP to NADPH. In Salmonella typhimurium (strain LT2 / SGSC1412 / ATCC 700720), this protein is 6-phosphogluconate dehydrogenase, decarboxylating (gnd).